A 275-amino-acid chain; its full sequence is Elongation factor Ts (275 aa).

An involved in Mg(2+) ion dislocation from EF-Tu region spans residues 76–79 (TDFV).

It belongs to the EF-Ts family.

It localises to the cytoplasm. Its function is as follows. Associates with the EF-Tu.GDP complex and induces the exchange of GDP to GTP. It remains bound to the aminoacyl-tRNA.EF-Tu.GTP complex up to the GTP hydrolysis stage on the ribosome. The chain is Elongation factor Ts from Mycobacterium avium (strain 104).